Reading from the N-terminus, the 479-residue chain is Zinc finger and SCAN domain-containing protein 26 (479 aa).

A Glycyl lysine isopeptide (Lys-Gly) (interchain with G-Cter in SUMO2) cross-link involves residue lysine 17. Residues 51–133 form the SCAN box domain; that stretch reads CKRFRQLRYE…VFLEDLQLEL (83 aa). Residues 155-187 form a disordered region; the sequence is TAPGKATPERQVQPEGDVPQPEREKGEAKRIEN. Residues 174 to 187 show a composition bias toward basic and acidic residues; that stretch reads QPEREKGEAKRIEN. The C2H2-type 1; degenerate zinc-finger motif lies at 232 to 254; that stretch reads CKCSEYGQAFFQHSDLIKHESSH. 7 C2H2-type zinc fingers span residues 283–305, 311–333, 339–361, 367–389, 395–417, 423–445, and 451–473; these read HQCH…QKIH, YQCK…LRIH, YLCI…QRIH, CQCK…QRIH, HQCN…HRIH, FKCT…VRIH, and YKCN…QRYH.

The protein resides in the nucleus. Its function is as follows. May be involved in transcriptional regulation. The chain is Zinc finger and SCAN domain-containing protein 26 (ZSCAN26) from Bos taurus (Bovine).